Consider the following 439-residue polypeptide: Phenylacetate-coenzyme A ligase (439 aa).

It belongs to the phenylacetyl-CoA ligase family. In terms of assembly, monomer.

The catalysed reaction is 2-phenylacetate + ATP + CoA = phenylacetyl-CoA + AMP + diphosphate. Its pathway is aromatic compound metabolism; phenylacetate degradation. Its activity is regulated as follows. Inhibited by divalent cations (zinc, copper, mercury) and by the sulfhydryl reagents 5,5-dithiobis(2-nitrobenzoic acid), N-ethylmaleimide and p-chloromercuribenzoate. Functionally, catalyzes the activation of phenylacetic acid (PA) to phenylacetyl-CoA (PA-CoA). Involved in the phenylalanine metabolism. Can also use CTP and UTP as substrate. This chain is Phenylacetate-coenzyme A ligase (paaK), found in Pseudomonas putida (Arthrobacter siderocapsulatus).